Consider the following 608-residue polypeptide: Signal transduction histidine-protein kinase AtoS (608 aa).

The Cytoplasmic portion of the chain corresponds to 1-15 (MHYMKWIYPRRLRNQ). A helical transmembrane segment spans residues 16-36 (MILMAILMVIVPTLTIGYIVE). Residues 37 to 189 (TEGRSAVLSE…DIRRQAWKMD (153 aa)) lie on the Periplasmic side of the membrane. A helical membrane pass occupies residues 190–210 (VRIIIVLTAGLLISLLLIVLF). The Cytoplasmic segment spans residues 211-608 (SRRLSANIDI…PINPQGNQTV (398 aa)). Residues 212–262 (RRLSANIDIITDGLSTLAQNIPTRLPQLPGEMGQISQSVNNLAQALRETRT) form the HAMP domain. The PAS domain maps to 260-305 (TRTLNDLIIENAADGVIAIDRQGDVTTMNPAAEVITGYQRHELVGQ). The PAC domain occupies 326-382 (HGTEHVALEISFPGRDRTIELSVTTSRIHNTHGEMIGALVIFSDLTARKETQRRMAQ). One can recognise a Histidine kinase domain in the interval 395–602 (GVAHEVRNPL…TFTLILPINP (208 aa)). His-398 is subject to Phosphohistidine; by autocatalysis.

As to quaternary structure, homodimer. Autophosphorylated. Each AtoS molecule may phosphorylate its partner within the dimer rather than phosphorylating itself.

It is found in the cell inner membrane. It catalyses the reaction ATP + protein L-histidine = ADP + protein N-phospho-L-histidine.. Member of the two-component regulatory system AtoS/AtoC. In the presence of acetoacetate, AtoS/AtoC stimulates the expression of the atoDAEB operon, leading to short chain fatty acid catabolism and activation of the poly-(R)-3-hydroxybutyrate (cPHB) biosynthetic pathway. Also induces the operon in response to spermidine. Involved in the regulation of motility and chemotaxis, via transcriptional induction of the flagellar regulon. AtoS is a membrane-associated kinase that phosphorylates and activates AtoC in response to environmental signals. The sequence is that of Signal transduction histidine-protein kinase AtoS (atoS) from Escherichia coli (strain K12).